We begin with the raw amino-acid sequence, 448 residues long: Putative vacuolar cation/proton exchanger 6 (448 aa).

Over 31–81 (MGLVNEVELKSLLEQETDSPQTNAASLMEQGSLRERRAKAPRNSVVQSFKI) the chain is Cytoplasmic. Residues 82-102 (VILSNKLNLLLPFGPLAILVH) traverse the membrane as a helical segment. Over 103–109 (YLTDNKG) the chain is Extracellular. A helical membrane pass occupies residues 110 to 130 (WFFLLSLVGITPLAERLGYAT). The Cytoplasmic portion of the chain corresponds to 131–141 (EQLSCYTGATV). The chain crosses the membrane as a helical span at residues 142 to 162 (GGLLNATFGNVIELIISIIAL). Residues 150-185 (GNVIELIISIIALKNGMIRVVQLTLLGSILSNILLV) form a cation selection region. Residues 163–178 (KNGMIRVVQLTLLGSI) are Extracellular-facing. A helical membrane pass occupies residues 179–199 (LSNILLVLGCAFFCGGLVFPG). At 200-209 (KDQVFDKRNA) the chain is on the cytoplasmic side. A helical membrane pass occupies residues 210–230 (VVSSGMLLMAVMGLLFPTFLH). At 231-243 (YTHSEVHAGSSEL) the chain is on the extracellular side. A helical transmembrane segment spans residues 244 to 264 (ALSRFISCIMLVAYAAYLFFQ). Residues 265-295 (LKSQPSFYTEKTNQNEETSNDDEDPEISKWE) lie on the Cytoplasmic side of the membrane. Residues 296 to 316 (AIIWLSIFTAWVSLLSGYLVD) traverse the membrane as a helical segment. Over 317–334 (AIEGTSVSWKIPISFISV) the chain is Extracellular. The helical transmembrane segment at 335-355 (ILLPIVGNAAEHAGAIMFAMK) threads the bilayer. Residues 341-376 (GNAAEHAGAIMFAMKDKLDLSLGVAIGSSIQISMFA) are cation selection. The Cytoplasmic segment spans residues 356–363 (DKLDLSLG). The helical transmembrane segment at 364 to 384 (VAIGSSIQISMFAVPFCVVIG) threads the bilayer. Over 385-393 (WMMGAQMDL) the chain is Extracellular. A helical membrane pass occupies residues 394-414 (NLQLFETATLLITVIVVAFFL). Residues 415–425 (QLEGTSNYFKR) lie on the Cytoplasmic side of the membrane. The helical transmembrane segment at 426–446 (LMLILCYLIVAASFFVHEDPH) threads the bilayer. Topologically, residues 447-448 (QG) are extracellular.

The protein belongs to the Ca(2+):cation antiporter (CaCA) (TC 2.A.19) family. Cation/proton exchanger (CAX) subfamily.

It is found in the vacuole membrane. In terms of biological role, vacuolar cation/proton exchanger (CAX). Translocates Ca(2+) and other metal ions into vacuoles using the proton gradient formed by H(+)-ATPase and H(+)-pyrophosphatase. This is Putative vacuolar cation/proton exchanger 6 (CAX6) from Arabidopsis thaliana (Mouse-ear cress).